We begin with the raw amino-acid sequence, 250 residues long: Phosphatidylglycerol--prolipoprotein diacylglyceryl transferase (250 aa).

Helical transmembrane passes span 11–31, 49–69, 84–104, and 109–129; these read LAIRWYGVIISIGAALGLLLA, FLIAFPSAIIGARLYYVIFEF, QGGLAIHGGIIFGVLAVYIYL, and ESFFEYVDVAAPSIILGQAIG. Residue Arg-130 coordinates a 1,2-diacyl-sn-glycero-3-phospho-(1'-sn-glycerol). A run of 3 helical transmembrane segments spans residues 169–189, 196–216, and 228–248; these read PTFLYESIWNFIVCIFLVYLL, GIVFMAYIGLYSLGRFFIEGL, and VAQLISVLGIILSIFFIYNII.

The protein belongs to the Lgt family.

The protein localises to the cell membrane. It carries out the reaction L-cysteinyl-[prolipoprotein] + a 1,2-diacyl-sn-glycero-3-phospho-(1'-sn-glycerol) = an S-1,2-diacyl-sn-glyceryl-L-cysteinyl-[prolipoprotein] + sn-glycerol 1-phosphate + H(+). It functions in the pathway protein modification; lipoprotein biosynthesis (diacylglyceryl transfer). In terms of biological role, catalyzes the transfer of the diacylglyceryl group from phosphatidylglycerol to the sulfhydryl group of the N-terminal cysteine of a prolipoprotein, the first step in the formation of mature lipoproteins. In Clostridium botulinum (strain 657 / Type Ba4), this protein is Phosphatidylglycerol--prolipoprotein diacylglyceryl transferase.